The following is a 163-amino-acid chain: Adenosine 5'-monophosphoramidase HINT2 (163 aa).

Residues 1–17 (MAAAVVLAAGLRAARRA) constitute a mitochondrion transit peptide. Residues 55–163 (IFSRILDKSL…GGRQLQWPPG (109 aa)) enclose the HIT domain. 2 residues coordinate AMP: Ser-63 and Asp-80. Lys-119 bears the N6-acetyllysine mark. Asn-136 contributes to the AMP binding site. Lys-139 bears the N6-acetyllysine mark. AMP contacts are provided by residues 142–145 (AQSV) and 149–151 (HIH). The Histidine triad motif motif lies at 147–151 (HLHIH). The Tele-AMP-histidine intermediate role is filled by His-149.

This sequence belongs to the HINT family. In terms of tissue distribution, high expression in liver and pancreas. Expression is significantly down-regulated in hepatocellular carcinoma (HCC) patients.

Its subcellular location is the mitochondrion. The catalysed reaction is adenosine 5'-phosphoramidate + H2O = AMP + NH4(+). Exhibits adenosine 5'-monophosphoramidase activity, hydrolyzing purine nucleotide phosphoramidates with a single phosphate group such as adenosine 5'monophosphoramidate (AMP-NH2) to yield AMP and NH2. Hydrolyzes adenosine 5'-O-p-nitrophenylphosphoramidate (AMP-pNA). Hydrolyzes fluorogenic purine nucleoside tryptamine phosphoramidates in vitro. May be involved in steroid biosynthesis. May play a role in apoptosis. The protein is Adenosine 5'-monophosphoramidase HINT2 of Homo sapiens (Human).